Reading from the N-terminus, the 277-residue chain is Large ribosomal subunit protein uL2 (277 aa).

Residues G222–K277 are disordered. Residues A264–K277 show a composition bias toward basic and acidic residues.

The protein belongs to the universal ribosomal protein uL2 family. Part of the 50S ribosomal subunit. Forms a bridge to the 30S subunit in the 70S ribosome.

Its function is as follows. One of the primary rRNA binding proteins. Required for association of the 30S and 50S subunits to form the 70S ribosome, for tRNA binding and peptide bond formation. It has been suggested to have peptidyltransferase activity; this is somewhat controversial. Makes several contacts with the 16S rRNA in the 70S ribosome. The sequence is that of Large ribosomal subunit protein uL2 from Streptococcus thermophilus (strain CNRZ 1066).